A 180-amino-acid chain; its full sequence is Cytidylate kinase (180 aa).

Residue 7–15 participates in ATP binding; it reads GPPGSGKST.

It belongs to the cytidylate kinase family. Type 2 subfamily.

The protein localises to the cytoplasm. It catalyses the reaction CMP + ATP = CDP + ADP. The catalysed reaction is dCMP + ATP = dCDP + ADP. In Sulfurisphaera tokodaii (strain DSM 16993 / JCM 10545 / NBRC 100140 / 7) (Sulfolobus tokodaii), this protein is Cytidylate kinase.